The chain runs to 226 residues: Ribonuclease T (226 aa).

The 175-residue stretch at 20 to 194 (VVIDVETAGF…YDTERTAELF (175 aa)) folds into the Exonuclease domain. The Mg(2+) site is built by Asp-23, Glu-25, His-181, and Asp-186. His-181 functions as the Proton donor/acceptor in the catalytic mechanism.

The protein belongs to the RNase T family. As to quaternary structure, homodimer. The cofactor is Mg(2+).

Functionally, trims short 3' overhangs of a variety of RNA species, leaving a one or two nucleotide 3' overhang. Responsible for the end-turnover of tRNA: specifically removes the terminal AMP residue from uncharged tRNA (tRNA-C-C-A). Also appears to be involved in tRNA biosynthesis. The chain is Ribonuclease T from Shewanella denitrificans (strain OS217 / ATCC BAA-1090 / DSM 15013).